A 254-amino-acid polypeptide reads, in one-letter code: uncharacterized protein (254 aa).

Belongs to the nucleoside-specific channel-forming outer membrane porin (Tsx) (TC 1.B.10) family.

This is an uncharacterized protein from Escherichia coli (strain K12).